A 32-amino-acid chain; its full sequence is Photosystem II reaction center protein T (32 aa).

The chain crosses the membrane as a helical span at residues 3–23 (TLVYTFLLIGTLAVLFAAVFF).

It belongs to the PsbT family. In terms of assembly, PSII is composed of 1 copy each of membrane proteins PsbA, PsbB, PsbC, PsbD, PsbE, PsbF, PsbH, PsbI, PsbJ, PsbK, PsbL, PsbM, PsbT, PsbX, PsbY, PsbZ, Psb30/Ycf12, at least 3 peripheral proteins of the oxygen-evolving complex and a large number of cofactors. It forms dimeric complexes.

The protein localises to the plastid. The protein resides in the chloroplast thylakoid membrane. Functionally, found at the monomer-monomer interface of the photosystem II (PS II) dimer, plays a role in assembly and dimerization of PSII. PSII is a light-driven water plastoquinone oxidoreductase, using light energy to abstract electrons from H(2)O, generating a proton gradient subsequently used for ATP formation. In Guillardia theta (Cryptophyte), this protein is Photosystem II reaction center protein T.